Here is a 454-residue protein sequence, read N- to C-terminus: Bifunctional protein GlmU (454 aa).

The pyrophosphorylase stretch occupies residues 1–226 (MALNVVILAA…AIEVEGANNR (226 aa)). UDP-N-acetyl-alpha-D-glucosamine is bound by residues 8–11 (LAAG), lysine 22, glutamine 73, 78–79 (GT), 100–102 (YGD), glycine 137, glutamate 151, asparagine 166, and asparagine 224. A Mg(2+)-binding site is contributed by aspartate 102. Asparagine 224 serves as a coordination point for Mg(2+). The segment at 227–247 (VQLAQLERAYQAREAEKLMIA) is linker. An N-acetyltransferase region spans residues 248–454 (GANLRDPSRI…GWQRPVKIKE (207 aa)). 2 residues coordinate UDP-N-acetyl-alpha-D-glucosamine: arginine 330 and lysine 348. Histidine 360 (proton acceptor) is an active-site residue. UDP-N-acetyl-alpha-D-glucosamine contacts are provided by tyrosine 363 and asparagine 374. Acetyl-CoA contacts are provided by residues alanine 377, 383 to 384 (NY), serine 402, alanine 420, and arginine 437.

The protein in the N-terminal section; belongs to the N-acetylglucosamine-1-phosphate uridyltransferase family. It in the C-terminal section; belongs to the transferase hexapeptide repeat family. In terms of assembly, homotrimer. Requires Mg(2+) as cofactor.

It is found in the cytoplasm. It catalyses the reaction alpha-D-glucosamine 1-phosphate + acetyl-CoA = N-acetyl-alpha-D-glucosamine 1-phosphate + CoA + H(+). The catalysed reaction is N-acetyl-alpha-D-glucosamine 1-phosphate + UTP + H(+) = UDP-N-acetyl-alpha-D-glucosamine + diphosphate. Its pathway is nucleotide-sugar biosynthesis; UDP-N-acetyl-alpha-D-glucosamine biosynthesis; N-acetyl-alpha-D-glucosamine 1-phosphate from alpha-D-glucosamine 6-phosphate (route II): step 2/2. It participates in nucleotide-sugar biosynthesis; UDP-N-acetyl-alpha-D-glucosamine biosynthesis; UDP-N-acetyl-alpha-D-glucosamine from N-acetyl-alpha-D-glucosamine 1-phosphate: step 1/1. The protein operates within bacterial outer membrane biogenesis; LPS lipid A biosynthesis. Functionally, catalyzes the last two sequential reactions in the de novo biosynthetic pathway for UDP-N-acetylglucosamine (UDP-GlcNAc). The C-terminal domain catalyzes the transfer of acetyl group from acetyl coenzyme A to glucosamine-1-phosphate (GlcN-1-P) to produce N-acetylglucosamine-1-phosphate (GlcNAc-1-P), which is converted into UDP-GlcNAc by the transfer of uridine 5-monophosphate (from uridine 5-triphosphate), a reaction catalyzed by the N-terminal domain. The chain is Bifunctional protein GlmU from Shewanella sp. (strain MR-7).